The following is a 456-amino-acid chain: Gustatory receptor for sugar taste 64a (456 aa).

The tract at residues Met1–Pro30 is disordered. Topologically, residues Met1–Phe91 are cytoplasmic. A helical membrane pass occupies residues Ala92 to Ser114. The Extracellular portion of the chain corresponds to Met115–Asn128. A helical transmembrane segment spans residues Phe129–Lys150. Residue Gly131 coordinates sucrose. At Lys151–Val182 the chain is on the cytoplasmic side. Residues Gln183–Ile205 form a helical membrane-spanning segment. 3 residues coordinate sucrose: Glu196, His197, and Tyr234. Residues Glu196, His197, Tyr234, Asn253, and Thr257 each contribute to the D-maltose site. Over Leu206–Ile245 the chain is Extracellular. The helical transmembrane segment at Ala246–Ser271 threads the bilayer. Thr257 is a binding site for sucrose. Over Lys272–Ala318 the chain is Cytoplasmic. Residues Met319–Phe342 form a helical membrane-spanning segment. The Extracellular segment spans residues Asn343–Asn350. A helical transmembrane segment spans residues Tyr351–Ala373. Tyr353 provides a ligand contact to sucrose. D-maltose is bound at residue Tyr353. Over Asp374–Thr421 the chain is Cytoplasmic. A helical membrane pass occupies residues Arg422–Gln441. At Phe442–Ala456 the chain is on the extracellular side.

It belongs to the insect chemoreceptor superfamily. Gustatory receptor (GR) family. Gr5a subfamily. In terms of assembly, homotetramer. Expressed in Gr5a-expressing sugar-sensing cells.

The protein resides in the cell membrane. Functionally, one of the few identified sugar gustatory receptors identified so far and which promotes the starvation-induced increase of feeding motivation. Required in combination with Gr64f to detect sucrose, maltose, and glucose. This Drosophila melanogaster (Fruit fly) protein is Gustatory receptor for sugar taste 64a (Gr64a).